Reading from the N-terminus, the 65-residue chain is Small ribosomal subunit protein bS21 (65 aa).

The tract at residues 43–65 (VDDRLKRARSKRRAQRANEESNA) is disordered. Over residues 48–57 (KRARSKRRAQ) the composition is skewed to basic residues.

Belongs to the bacterial ribosomal protein bS21 family.

This chain is Small ribosomal subunit protein bS21, found in Chloroherpeton thalassium (strain ATCC 35110 / GB-78).